Consider the following 369-residue polypeptide: Phospho-N-acetylmuramoyl-pentapeptide-transferase (369 aa).

Transmembrane regions (helical) follow at residues 30 to 50 (AAAI…IGYL), 73 to 93 (LPTM…LLWA), 99 to 119 (YVWL…IDDY), 140 to 160 (VSLG…SVLL), 171 to 191 (LMID…TAVS), 202 to 222 (GLAA…AYLT), 239 to 259 (GGEV…FLWF), 266 to 286 (IFMG…IALL), 291 to 311 (LLLP…SLQV), and 346 to 366 (KIVI…LMTL).

It belongs to the glycosyltransferase 4 family. MraY subfamily. Mg(2+) is required as a cofactor.

The protein localises to the cell inner membrane. The enzyme catalyses UDP-N-acetyl-alpha-D-muramoyl-L-alanyl-gamma-D-glutamyl-meso-2,6-diaminopimeloyl-D-alanyl-D-alanine + di-trans,octa-cis-undecaprenyl phosphate = di-trans,octa-cis-undecaprenyl diphospho-N-acetyl-alpha-D-muramoyl-L-alanyl-D-glutamyl-meso-2,6-diaminopimeloyl-D-alanyl-D-alanine + UMP. It functions in the pathway cell wall biogenesis; peptidoglycan biosynthesis. Functionally, catalyzes the initial step of the lipid cycle reactions in the biosynthesis of the cell wall peptidoglycan: transfers peptidoglycan precursor phospho-MurNAc-pentapeptide from UDP-MurNAc-pentapeptide onto the lipid carrier undecaprenyl phosphate, yielding undecaprenyl-pyrophosphoryl-MurNAc-pentapeptide, known as lipid I. The sequence is that of Phospho-N-acetylmuramoyl-pentapeptide-transferase from Chlorobium phaeobacteroides (strain BS1).